Here is a 323-residue protein sequence, read N- to C-terminus: Calcium homeostasis modulator protein 2 (323 aa).

Residues 1-21 (MAALIAENFRFLSLFFKSKDV) lie on the Cytoplasmic side of the membrane. The central pore stretch occupies residues 14 to 39 (LFFKSKDVMIFNGLVALGTVGSQELF). The helical transmembrane segment at 22–43 (MIFNGLVALGTVGSQELFTVVA) threads the bilayer. Residues 44–52 (FHCPCSPAR) are Extracellular-facing. Intrachain disulfides connect C46/C130 and C48/C162. Residues 53 to 76 (NYLYGLAAIGVPALALFLIGVILN) form a helical membrane-spanning segment. Over 77–101 (NHTWNLVAECQYRRTKNCSAAPNFL) the chain is Cytoplasmic. Residues 102–132 (LLSSIVGRAAVAPVTWSVISLLRGEAYVCAL) traverse the membrane as a helical segment. Topologically, residues 133–179 (SEFVNPHSLMVGERSFPVAHATEILARFPCGEGPANLSVFREEVSRR) are extracellular. Residues 145-152 (ERSFPVAH) form a hemichannel docking region. The helical transmembrane segment at 180–206 (LKYESQLFGWLLIGVVAILVFLTKCLK) threads the bilayer. The Cytoplasmic segment spans residues 207-323 (HYCSPLSYRQ…DHVEMSLLPS (117 aa)). Positions 214–251 (YRQEAYWAQYRANEDQLFQRTAEVHSRVLAANNVRRFF) are intersubunit interaction.

This sequence belongs to the CALHM family. In terms of assembly, homo-undecamer. Two undecameric hemichannels can assemble in a head-to-head manner to form a gap junction.

It localises to the cell membrane. The enzyme catalyses ATP(in) = ATP(out). Functionally, pore-forming subunit of Ca(2+) homeostasis modulator channels. Mediates ATP release from astrocytes and ATP-induced Ca(2+) influx in microglia thus regulating neuronal ATP and Ca(2+) homeostasis, synaptic transmission and neuroinflammatory response. May form intercellular gap junctions. The gating mechanism remains unknown. The polypeptide is Calcium homeostasis modulator protein 2 (CALHM2) (Bos taurus (Bovine)).